Here is a 215-residue protein sequence, read N- to C-terminus: MTAEFIIRLILAAIACGAIGMERQMRGKGAGLRTHVLIGMGSALFMIVSKYGFADVLSLDHVGLDPSRIAAQVVTGVGFIGAGNILVRNQNIVGLTTAADIWVTAAIGMVIGSGMYELGIYGSVMTLLVLEVFHQLTFRLMNKNYHLQLTLVNGNTVSMLDWFKQQKIKTDLVSLQENEDHEVVAIDIQLHATTSIEDLLRLLKGMAGVKGVSIS.

Transmembrane regions (helical) follow at residues 1-21 (MTAE…AIGM), 36-56 (VLIG…FADV), 67-87 (SRIA…NILV), 92-112 (IVGL…MVIG), and 118-138 (LGIY…QLTF).

This sequence belongs to the MgtC/SapB family.

Its subcellular location is the cell inner membrane. This is an uncharacterized protein from Escherichia coli O157:H7.